A 254-amino-acid polypeptide reads, in one-letter code: tRNA threonylcarbamoyladenosine dehydratase (254 aa).

Belongs to the HesA/MoeB/ThiF family.

Functionally, catalyzes the ATP-dependent dehydration of threonylcarbamoyladenosine at position 37 (t(6)A37) to form cyclic t(6)A37 (ct(6)A37) in tRNAs that read codons beginning with adenine. This Bacillus subtilis (strain 168) protein is tRNA threonylcarbamoyladenosine dehydratase (tcdA).